We begin with the raw amino-acid sequence, 373 residues long: Flagellar P-ring protein (373 aa).

An N-terminal signal peptide occupies residues 1–26 (MKLFFRFVTLVAVLAMSLANVAPAWA).

The protein belongs to the FlgI family. As to quaternary structure, the basal body constitutes a major portion of the flagellar organelle and consists of four rings (L,P,S, and M) mounted on a central rod.

It is found in the periplasm. The protein resides in the bacterial flagellum basal body. Its function is as follows. Assembles around the rod to form the L-ring and probably protects the motor/basal body from shearing forces during rotation. The polypeptide is Flagellar P-ring protein (Rhizobium johnstonii (strain DSM 114642 / LMG 32736 / 3841) (Rhizobium leguminosarum bv. viciae)).